The sequence spans 223 residues: Endonuclease V (223 aa).

Residues D35 and D103 each coordinate Mg(2+).

This sequence belongs to the endonuclease V family. Mg(2+) serves as cofactor.

It localises to the cytoplasm. The catalysed reaction is Endonucleolytic cleavage at apurinic or apyrimidinic sites to products with a 5'-phosphate.. In terms of biological role, DNA repair enzyme involved in the repair of deaminated bases. Selectively cleaves double-stranded DNA at the second phosphodiester bond 3' to a deoxyinosine leaving behind the intact lesion on the nicked DNA. The polypeptide is Endonuclease V (Escherichia coli O139:H28 (strain E24377A / ETEC)).